The sequence spans 295 residues: Lipoyl synthase (295 aa).

Cys-34, Cys-39, Cys-45, Cys-60, Cys-64, Cys-67, and Ser-273 together coordinate [4Fe-4S] cluster. Residues Trp-46–Ser-262 enclose the Radical SAM core domain.

This sequence belongs to the radical SAM superfamily. Lipoyl synthase family. It depends on [4Fe-4S] cluster as a cofactor.

The protein localises to the cytoplasm. It catalyses the reaction [[Fe-S] cluster scaffold protein carrying a second [4Fe-4S](2+) cluster] + N(6)-octanoyl-L-lysyl-[protein] + 2 oxidized [2Fe-2S]-[ferredoxin] + 2 S-adenosyl-L-methionine + 4 H(+) = [[Fe-S] cluster scaffold protein] + N(6)-[(R)-dihydrolipoyl]-L-lysyl-[protein] + 4 Fe(3+) + 2 hydrogen sulfide + 2 5'-deoxyadenosine + 2 L-methionine + 2 reduced [2Fe-2S]-[ferredoxin]. It participates in protein modification; protein lipoylation via endogenous pathway; protein N(6)-(lipoyl)lysine from octanoyl-[acyl-carrier-protein]: step 2/2. Its function is as follows. Catalyzes the radical-mediated insertion of two sulfur atoms into the C-6 and C-8 positions of the octanoyl moiety bound to the lipoyl domains of lipoate-dependent enzymes, thereby converting the octanoylated domains into lipoylated derivatives. The chain is Lipoyl synthase from Anaplasma phagocytophilum (strain HZ).